Here is a 620-residue protein sequence, read N- to C-terminus: Endoglucanase 10 (620 aa).

A disordered region spans residues 1–26 (MFGRDPWGGPLEISNADSATDDDRSR). The chain crosses the membrane as a helical; Signal-anchor for type II membrane protein span at residues 72–92 (IFMWTVGTILGVGLFIGFVMM). Catalysis depends on Asp-165, which acts as the Nucleophile. Residues Asn-216, Asn-314, Asn-323, Asn-344, Asn-408, and Asn-425 are each glycosylated (N-linked (GlcNAc...) asparagine). Catalysis depends on residues His-513 and Asp-561. The N-linked (GlcNAc...) asparagine glycan is linked to Asn-567. The active site involves Glu-570.

Belongs to the glycosyl hydrolase 9 (cellulase E) family. As to expression, ubiquitous.

The protein resides in the membrane. The enzyme catalyses Endohydrolysis of (1-&gt;4)-beta-D-glucosidic linkages in cellulose, lichenin and cereal beta-D-glucans.. The polypeptide is Endoglucanase 10 (GLU2) (Oryza sativa subsp. japonica (Rice)).